The following is a 298-amino-acid chain: Proton-activated chloride channel (298 aa).

Topologically, residues 1-12 are cytoplasmic; that stretch reads MPIGFNKACLKN. A helical transmembrane segment spans residues 13 to 33; the sequence is VFTVILVLIYLALTAVAVFLA. At 34–245 the chain is on the extracellular side; that stretch reads YQTISDFMDK…RDPFIQQVKD (212 aa). The helical transmembrane segment at 246-266 threads the bilayer; it reads IVTANPWNTIAILCGVFMALF. The Cytoplasmic segment spans residues 267–298; it reads KAADFAKLSIKWMIRIRKRHIRAKMREMNQIS.

It belongs to the proton-activated chloride channel family.

It is found in the cell membrane. It carries out the reaction chloride(in) = chloride(out). Chloride channel gated by pH that facilitates the entry of chloride ions into cells upon exposure to extracellular acidic pH. Displays channel activity with distinct kinetic properties compared to the human ortholog channel. The sequence is that of Proton-activated chloride channel from Danio rerio (Zebrafish).